Consider the following 247-residue polypeptide: Ribonuclease PH (247 aa).

Residues arginine 87 and glycine 125 to arginine 127 contribute to the phosphate site.

This sequence belongs to the RNase PH family. As to quaternary structure, homohexameric ring arranged as a trimer of dimers.

It catalyses the reaction tRNA(n+1) + phosphate = tRNA(n) + a ribonucleoside 5'-diphosphate. In terms of biological role, phosphorolytic 3'-5' exoribonuclease that plays an important role in tRNA 3'-end maturation. Removes nucleotide residues following the 3'-CCA terminus of tRNAs; can also add nucleotides to the ends of RNA molecules by using nucleoside diphosphates as substrates, but this may not be physiologically important. Probably plays a role in initiation of 16S rRNA degradation (leading to ribosome degradation) during starvation. The polypeptide is Ribonuclease PH (Trichormus variabilis (strain ATCC 29413 / PCC 7937) (Anabaena variabilis)).